Here is a 92-residue protein sequence, read N- to C-terminus: Protein S100-B (92 aa).

Ser-2 is subject to N-acetylserine. 2 EF-hand domains span residues 13-48 and 49-84; these read DVFH…LEEI and KEQE…VTTA. Zn(2+) is bound at residue His-16. The Ca(2+) site is built by Ser-19 and Glu-22. Residue His-26 participates in Zn(2+) binding. The Ca(2+) site is built by Lys-27, Glu-32, Asp-62, Asp-64, Asp-66, Glu-68, and Glu-73. 2 residues coordinate Zn(2+): His-86 and His-91.

It belongs to the S-100 family. Dimer of either two alpha chains, or two beta chains, or one alpha and one beta chain. The S100B dimer binds two molecules of STK38. Interacts with CACYBP in a calcium-dependent manner. Interacts with ATAD3A; this interaction probably occurs in the cytosol prior to ATAD3A mitochondrial targeting. Interacts with S100A6. The S100B dimer interacts with two molecules of CAPZA1. Interacts with AGER. Interacts with PPP5C (via TPR repeats); the interaction is calcium-dependent and modulates PPP5C activity. Interacts with TPPP; this interaction inhibits TPPP dimerization. Interacts with isoform CLSTN3beta of CLSTN3; interaction promotes secretion. Although predominant among the water-soluble brain proteins, S100 is also found in a variety of other tissues.

The protein localises to the cytoplasm. The protein resides in the nucleus. It is found in the secreted. Functionally, small zinc- and- and calcium-binding protein that is highly expressed in astrocytes and constitutes one of the most abundant soluble proteins in brain. Weakly binds calcium but binds zinc very tightly-distinct binding sites with different affinities exist for both ions on each monomer. Physiological concentrations of potassium ion antagonize the binding of both divalent cations, especially affecting high-affinity calcium-binding sites. Acts as a neurotrophic factor that promotes astrocytosis and axonal proliferation. Involved in innervation of thermogenic adipose tissue by acting as an adipocyte-derived neurotrophic factor that promotes sympathetic innervation of adipose tissue. Binds to and initiates the activation of STK38 by releasing autoinhibitory intramolecular interactions within the kinase. Interaction with AGER after myocardial infarction may play a role in myocyte apoptosis by activating ERK1/2 and p53/TP53 signaling. Could assist ATAD3A cytoplasmic processing, preventing aggregation and favoring mitochondrial localization. May mediate calcium-dependent regulation on many physiological processes by interacting with other proteins, such as TPR-containing proteins, and modulating their activity. In Rattus norvegicus (Rat), this protein is Protein S100-B.